Reading from the N-terminus, the 147-residue chain is Large ribosomal subunit protein bL9 (147 aa).

It belongs to the bacterial ribosomal protein bL9 family.

Its function is as follows. Binds to the 23S rRNA. The chain is Large ribosomal subunit protein bL9 from Campylobacter fetus subsp. fetus (strain 82-40).